Consider the following 254-residue polypeptide: uncharacterized protein (254 aa).

Residues Val-7 and Asn-85 each contribute to the NADP(+) site. Ser-136 (proton donor) is an active-site residue. NADP(+) is bound by residues Tyr-150, Lys-154, Val-181, and Thr-183. Residue Tyr-150 is the Proton acceptor of the active site. Lys-154 (lowers pKa of active site Tyr) is an active-site residue.

It belongs to the short-chain dehydrogenases/reductases (SDR) family.

This is an uncharacterized protein from Saccharomyces cerevisiae (strain ATCC 204508 / S288c) (Baker's yeast).